Here is a 416-residue protein sequence, read N- to C-terminus: Bifunctional protein GlmU (416 aa).

Residues 1–229 (MTNYAIILAA…FNESLGVNDR (229 aa)) are pyrophosphorylase. Residues 8–11 (LAAG), K22, Q72, and 77–78 (GT) contribute to the UDP-N-acetyl-alpha-D-glucosamine site. Residue D102 coordinates Mg(2+). The UDP-N-acetyl-alpha-D-glucosamine site is built by G139, E154, N169, and N227. N227 is a binding site for Mg(2+). The linker stretch occupies residues 230–250 (VALATAETVMRQRITQKHMVN). Residues 251–416 (GVTFQNPETV…DSHCTFGSWR (166 aa)) are N-acetyltransferase. Residues R332 and K350 each coordinate UDP-N-acetyl-alpha-D-glucosamine. H362 (proton acceptor) is an active-site residue. Residues Y365 and N376 each contribute to the UDP-N-acetyl-alpha-D-glucosamine site. Acetyl-CoA is bound by residues A379 and 385–386 (NY).

It in the N-terminal section; belongs to the N-acetylglucosamine-1-phosphate uridyltransferase family. The protein in the C-terminal section; belongs to the transferase hexapeptide repeat family. Homotrimer. Mg(2+) is required as a cofactor.

It is found in the cytoplasm. The enzyme catalyses alpha-D-glucosamine 1-phosphate + acetyl-CoA = N-acetyl-alpha-D-glucosamine 1-phosphate + CoA + H(+). It catalyses the reaction N-acetyl-alpha-D-glucosamine 1-phosphate + UTP + H(+) = UDP-N-acetyl-alpha-D-glucosamine + diphosphate. Its pathway is nucleotide-sugar biosynthesis; UDP-N-acetyl-alpha-D-glucosamine biosynthesis; N-acetyl-alpha-D-glucosamine 1-phosphate from alpha-D-glucosamine 6-phosphate (route II): step 2/2. It functions in the pathway nucleotide-sugar biosynthesis; UDP-N-acetyl-alpha-D-glucosamine biosynthesis; UDP-N-acetyl-alpha-D-glucosamine from N-acetyl-alpha-D-glucosamine 1-phosphate: step 1/1. The protein operates within bacterial outer membrane biogenesis; LPS lipid A biosynthesis. Its function is as follows. Catalyzes the last two sequential reactions in the de novo biosynthetic pathway for UDP-N-acetylglucosamine (UDP-GlcNAc). The C-terminal domain catalyzes the transfer of acetyl group from acetyl coenzyme A to glucosamine-1-phosphate (GlcN-1-P) to produce N-acetylglucosamine-1-phosphate (GlcNAc-1-P), which is converted into UDP-GlcNAc by the transfer of uridine 5-monophosphate (from uridine 5-triphosphate), a reaction catalyzed by the N-terminal domain. This is Bifunctional protein GlmU from Streptococcus pyogenes serotype M12 (strain MGAS2096).